The sequence spans 462 residues: Glycoprotein endo-alpha-1,2-mannosidase (462 aa).

The Cytoplasmic segment spans residues 1 to 9 (MAKFRRRTC). Residues 10 to 30 (ILLSLFILFIFSLMMGLKMLW) traverse the membrane as a helical; Signal-anchor for type II membrane protein segment. The Lumenal portion of the chain corresponds to 31-462 (PNAASFGPPF…YALDQQQPAS (432 aa)). The tract at residues 60 to 462 (DFQRSDRINM…YALDQQQPAS (403 aa)) is catalytic.

This sequence belongs to the glycosyl hydrolase 99 family. Post-translationally, undergoes proteolytic cleavage in the C-terminal region.

The protein resides in the golgi apparatus membrane. The enzyme catalyses N-{alpha-Glc-(1-&gt;3)-alpha-Man-(1-&gt;2)-alpha-Man-(1-&gt;2)-alpha-Man-(1-&gt;3)-[alpha-Man-(1-&gt;2)-alpha-Man-(1-&gt;3)-[alpha-Man-(1-&gt;2)-alpha-Man-(1-&gt;6)]-alpha-Man-(1-&gt;6)]-beta-Man-(1-&gt;4)-beta-GlcNAc-(1-&gt;4)-beta-GlcNAc}-L-asparaginyl-[protein] + H2O = alpha-D-glucosyl-(1-&gt;3)-D-mannopyranose + N(4)-{alpha-D-Man-(1-&gt;2)-alpha-D-Man-(1-&gt;3)-[alpha-D-Man-(1-&gt;2)-alpha-D-Man-(1-&gt;3)-[alpha-D-Man-(1-&gt;2)-alpha-D-Man-(1-&gt;6)]-alpha-D-Man-(1-&gt;6)]-beta-D-Man-(1-&gt;4)-beta-D-GlaNAc-(1-&gt;4)-beta-D-GlcNAc}-L-asparaginyl-[protein] (N-glucan mannose isomer 8A1,2,3B1,2). The chain is Glycoprotein endo-alpha-1,2-mannosidase (Manea) from Mus musculus (Mouse).